Consider the following 183-residue polypeptide: Protein Syd (183 aa).

Belongs to the Syd family.

It localises to the cell inner membrane. Its function is as follows. Interacts with the SecY protein in vivo. May bind preferentially to an uncomplexed state of SecY, thus functioning either as a chelating agent for excess SecY in the cell or as a regulatory factor that negatively controls the translocase function. This Aliivibrio fischeri (strain ATCC 700601 / ES114) (Vibrio fischeri) protein is Protein Syd.